The sequence spans 201 residues: Small ribosomal subunit protein uS4 (201 aa).

The 61-residue stretch at 91–151 (SRLDNVVYRA…EKSRKMVWFD (61 aa)) folds into the S4 RNA-binding domain.

It belongs to the universal ribosomal protein uS4 family. In terms of assembly, part of the 30S ribosomal subunit. Contacts protein S5. The interaction surface between S4 and S5 is involved in control of translational fidelity.

One of the primary rRNA binding proteins, it binds directly to 16S rRNA where it nucleates assembly of the body of the 30S subunit. In terms of biological role, with S5 and S12 plays an important role in translational accuracy. The chain is Small ribosomal subunit protein uS4 from Corynebacterium kroppenstedtii (strain DSM 44385 / JCM 11950 / CIP 105744 / CCUG 35717).